The primary structure comprises 314 residues: Mitotic checkpoint protein BUB3.3 (314 aa).

WD repeat units lie at residues 11–50, 52–90, 92–131, 134–173, 176–215, 229–269, and 272–311; these read PIED…LSLE, NSQA…VDTI, RHDD…SLVF, DAGG…QSYA, VEVP…SEIK, LDGV…RLNE, and RYSN…QVFI.

It belongs to the WD repeat BUB3 family. Part of the mitotic checkpoint complex (MCC).

It is found in the nucleus. It localises to the chromosome. The protein resides in the centromere. The protein localises to the kinetochore. Its subcellular location is the cytoplasm. It is found in the cytoskeleton. It localises to the phragmoplast. The protein resides in the spindle. Functionally, has a dual function in spindle-assembly checkpoint signaling and in promoting the establishment of correct kinetochore-microtubule (K-MT) attachments. Promotes the formation of stable end-on bipolar attachments. Necessary for kinetochore localization of BUB1. The BUB1/BUB3 complex plays a role in the inhibition of anaphase-promoting complex or cyclosome (APC/C) when spindle-assembly checkpoint is activated and inhibits the ubiquitin ligase activity of APC/C by phosphorylating its activator CDC20. The protein is Mitotic checkpoint protein BUB3.3 (BUB3.3) of Arabidopsis thaliana (Mouse-ear cress).